The chain runs to 478 residues: NADH-quinone oxidoreductase subunit N 1 (478 aa).

Helical transmembrane passes span 6-26, 33-53, 71-91, 99-119, 121-141, 156-176, 193-212, 244-264, 265-285, 299-319, 321-341, 364-384, 388-408, and 438-458; these read TVLP…SGVF, FAIT…LVAA, FADV…VTFN, FEFP…VSAS, LITL…LAAF, FVLG…VYGF, PTAA…GLAF, IAVF…VLGQ, WRDL…IGAI, IGHM…GVSG, LIYL…IIAM, FAFV…LAGF, FYVF…LGII, and AGVS…VFHP.

The protein belongs to the complex I subunit 2 family. As to quaternary structure, NDH-1 is composed of 14 different subunits. Subunits NuoA, H, J, K, L, M, N constitute the membrane sector of the complex.

Its subcellular location is the cell inner membrane. The catalysed reaction is a quinone + NADH + 5 H(+)(in) = a quinol + NAD(+) + 4 H(+)(out). Functionally, NDH-1 shuttles electrons from NADH, via FMN and iron-sulfur (Fe-S) centers, to quinones in the respiratory chain. The immediate electron acceptor for the enzyme in this species is believed to be ubiquinone. Couples the redox reaction to proton translocation (for every two electrons transferred, four hydrogen ions are translocated across the cytoplasmic membrane), and thus conserves the redox energy in a proton gradient. This Acidiphilium cryptum (strain JF-5) protein is NADH-quinone oxidoreductase subunit N 1.